The following is a 303-amino-acid chain: Ornithine carbamoyltransferase (303 aa).

Carbamoyl phosphate is bound by residues 53–56 (STRT), Gln80, Arg104, and 131–134 (HPCQ). Residues Asn162, Asp222, and 226 to 227 (SM) each bind L-ornithine. Carbamoyl phosphate is bound by residues 261 to 262 (CL) and Arg289.

The protein belongs to the aspartate/ornithine carbamoyltransferase superfamily. OTCase family.

It is found in the cytoplasm. The catalysed reaction is carbamoyl phosphate + L-ornithine = L-citrulline + phosphate + H(+). It participates in amino-acid biosynthesis; L-arginine biosynthesis; L-arginine from L-ornithine and carbamoyl phosphate: step 1/3. Its function is as follows. Reversibly catalyzes the transfer of the carbamoyl group from carbamoyl phosphate (CP) to the N(epsilon) atom of ornithine (ORN) to produce L-citrulline. The chain is Ornithine carbamoyltransferase from Mesorhizobium japonicum (strain LMG 29417 / CECT 9101 / MAFF 303099) (Mesorhizobium loti (strain MAFF 303099)).